Here is a 263-residue protein sequence, read N- to C-terminus: Putative TATA-binding protein pB263R (263 aa).

It belongs to the asfivirus B263R family.

Its function is as follows. Putative TATA-binding protein. This is Putative TATA-binding protein pB263R from Ornithodoros (relapsing fever ticks).